The chain runs to 287 residues: Vesicle-associated protein 4-3 (287 aa).

Residues 1–14 are compositionally biased toward basic and acidic residues; it reads MALTEDKSDSDGRR. Residues 1–45 are disordered; sequence MALTEDKSDSDGRRWGKFKLPFRNSNSQAPSASSSSSMATSSSSV. Low complexity predominate over residues 25–45; sequence SNSQAPSASSSSSMATSSSSV. Positions 99–221 constitute an MSP domain; the sequence is RLKLDPSAKL…EEQVMRVVFL (123 aa).

The protein belongs to the VAMP-associated protein (VAP) (TC 9.B.17) family.

May play a role in vesicle trafficking. This is Vesicle-associated protein 4-3 (PVA43) from Arabidopsis thaliana (Mouse-ear cress).